A 271-amino-acid polypeptide reads, in one-letter code: Putative pyruvate, phosphate dikinase regulatory protein 2 (271 aa).

Position 151–158 (151–158 (GVSRTSKT)) interacts with ADP.

Belongs to the pyruvate, phosphate/water dikinase regulatory protein family. PDRP subfamily.

The catalysed reaction is N(tele)-phospho-L-histidyl/L-threonyl-[pyruvate, phosphate dikinase] + ADP = N(tele)-phospho-L-histidyl/O-phospho-L-threonyl-[pyruvate, phosphate dikinase] + AMP + H(+). The enzyme catalyses N(tele)-phospho-L-histidyl/O-phospho-L-threonyl-[pyruvate, phosphate dikinase] + phosphate + H(+) = N(tele)-phospho-L-histidyl/L-threonyl-[pyruvate, phosphate dikinase] + diphosphate. Functionally, bifunctional serine/threonine kinase and phosphorylase involved in the regulation of the pyruvate, phosphate dikinase (PPDK) by catalyzing its phosphorylation/dephosphorylation. The chain is Putative pyruvate, phosphate dikinase regulatory protein 2 from Staphylococcus haemolyticus (strain JCSC1435).